A 428-amino-acid chain; its full sequence is Pregnancy-specific beta-1-glycoprotein 3 (428 aa).

Positions 1 to 34 (MGPLSAPPCTQRITWKGLLLTALLLNFWNLPTTA) are cleaved as a signal peptide. Positions 35 to 144 (QVTIEAEPTK…TGHFTFTLYL (110 aa)) constitute an Ig-like V-type domain. N-linked (GlcNAc...) asparagine glycosylation is found at Asn104 and Asn111. Residues 127 to 129 (RGD) carry the Cell attachment site motif. 3 Ig-like C2-type domains span residues 147 to 234 (PKPS…VTLN), 240 to 327 (PKPY…VTLN), and 335 to 410 (PRIY…KSMT). 3 disulfides stabilise this stretch: Cys169/Cys217, Cys262/Cys310, and Cys354/Cys394. N-linked (GlcNAc...) asparagine glycosylation is found at Asn268 and Asn303.

This sequence belongs to the immunoglobulin superfamily. CEA family.

Its subcellular location is the secreted. This Homo sapiens (Human) protein is Pregnancy-specific beta-1-glycoprotein 3 (PSG3).